Consider the following 538-residue polypeptide: Sucrose transport protein SUT1 (538 aa).

At 1-52 (MARGSGAGGGGGGGGGGLELSVGVGGGGGARGGGGGEAAAAVETAAPISLGR) the chain is on the cytoplasmic side. The helical transmembrane segment at 53 to 73 (LILSGMVAGGVQYGWALQLSL) threads the bilayer. Residues 74 to 81 (LTPYVQTL) lie on the Extracellular side of the membrane. Residues 82-102 (GLSHALTSFMWLCGPIAGMVV) form a helical membrane-spanning segment. Residues 103–123 (QPCVGLYSDRCTSKWGRRRPY) lie on the Cytoplasmic side of the membrane. A helical membrane pass occupies residues 124-144 (ILTGCVLICLAVVVIGFSADI). Over 145–162 (GYAMGDTKEDCSVYHGSR) the chain is Extracellular. Residues 163–183 (WHAAIVYVLGFWLLDFSNNTV) traverse the membrane as a helical segment. Residues 184 to 198 (QGPARALMADLSGRH) are Cytoplasmic-facing. Residues 199–219 (GPGTANSIFCSWMAMGNILGY) form a helical membrane-spanning segment. Topologically, residues 220 to 247 (SSGSTNNWHKWFPFLKTRACCEACANLK) are extracellular. A helical transmembrane segment spans residues 248–268 (GAFLVAVIFLSLCLVITLIFA). Topologically, residues 269-306 (KEVPFKGNAALPTKSNEPAEPEGTGPLAVLKGFRNLPT) are cytoplasmic. Residues 307 to 327 (GMPSVLIVTGLTWLSWFPFIL) traverse the membrane as a helical segment. Topologically, residues 328-357 (YDTDWMGREIYHGDPKGTDPQIEAFNQGVR) are extracellular. Residues 358 to 378 (AGAFGLLLNSIVLGFSSFLIE) form a helical membrane-spanning segment. Residues 379 to 388 (PMCRKVGPRV) are Cytoplasmic-facing. Residues 389 to 409 (VWVTSNFLVCIAMAATALISF) traverse the membrane as a helical segment. At 410 to 433 (WSLKDFHGTVQKAITADKSIKAVC) the chain is on the extracellular side. The chain crosses the membrane as a helical span at residues 434 to 454 (LVLFAFLGVPLAVLYSVPFAV). Over 455–470 (TAQLAATRGGGQGLCT) the chain is Cytoplasmic. The chain crosses the membrane as a helical span at residues 471 to 491 (GVLNISIVIPQVVIALGAGPW). Residues 492–499 (DELFGKGN) lie on the Extracellular side of the membrane. Residues 500–520 (IPAFGLASGFALIGGVAGIFL) traverse the membrane as a helical segment. The Cytoplasmic segment spans residues 521 to 538 (LPKISKRQFRSVSMGGGH).

This sequence belongs to the glycoside-pentoside-hexuronide (GPH) cation symporter transporter (TC 2.A.2.4) family. Homodimer.

It is found in the cell membrane. Its pathway is glycan biosynthesis; sucrose metabolism. Functionally, responsible for the transport of sucrose into the cell, with the concomitant uptake of protons (symport system). May also transport other glucosides. May be required for apoplastic phloem sucrose loading in source tissues (e.g. leaves) in order to transport it to sink tissues (e.g. roots, flowers). In Oryza sativa subsp. indica (Rice), this protein is Sucrose transport protein SUT1 (SUT1).